The sequence spans 852 residues: Protein mono-ADP-ribosyltransferase PARP8 (852 aa).

Disordered stretches follow at residues Asn-113–Glu-134 and Ser-289–Gly-310. The segment covering Val-123–Glu-134 has biased composition (acidic residues). ADP-ribosylcysteine is present on residues Cys-332, Cys-366, Cys-375, and Cys-394. The PARP catalytic domain occupies Glu-615–Leu-842. The segment at Gln-748–Ser-775 is disordered. Residues Ala-757–Ser-775 show a composition bias toward low complexity.

This sequence belongs to the ARTD/PARP family. In terms of processing, auto-mono-ADP-ribosylated.

It carries out the reaction L-cysteinyl-[protein] + NAD(+) = S-(ADP-D-ribosyl)-L-cysteinyl-[protein] + nicotinamide + H(+). In terms of biological role, mono-ADP-ribosyltransferase that mediates mono-ADP-ribosylation of target proteins. In Mus musculus (Mouse), this protein is Protein mono-ADP-ribosyltransferase PARP8.